We begin with the raw amino-acid sequence, 165 residues long: Small ribosomal subunit protein eS10 (165 aa).

Tyr12 carries the post-translational modification Phosphotyrosine. The disordered stretch occupies residues 92-165; the sequence is ATLRRSRPET…FGRGRGQPPQ (74 aa). Positions 97–128 are enriched in basic and acidic residues; the sequence is SRPETGRPRPKGLEGERPARLTRGEADRDTYR. Residues Lys138 and Lys139 each participate in a glycyl lysine isopeptide (Lys-Gly) (interchain with G-Cter in ubiquitin) cross-link. Ser146 is subject to Phosphoserine. An Omega-N-methylarginine modification is found at Arg153. A compositionally biased stretch (gly residues) spans 154–165; the sequence is GGFGRGRGQPPQ. 2 positions are modified to symmetric dimethylarginine: Arg158 and Arg160.

Belongs to the eukaryotic ribosomal protein eS10 family. Component of the small ribosomal subunit. The methylated form interacts with NPM1. Post-translationally, methylated by PRMT5. Methylation is necessary for its interaction with NPS1, its localization in the granular component (GC) region of the nucleolus, for the proper assembly of ribosomes, protein synthesis and optimal cell proliferation. Monoubiquitinated by ZNF598 when a ribosome has stalled during translation of poly(A) sequences, leading to preclude synthesis of a long poly-lysine tail and initiate the ribosome quality control (RQC) pathway to degrade the potentially detrimental aberrant nascent polypeptide. Deubiquitinated by OTUD3 and USP21, antagonizing ZNF598 activity. Deubiquitinated by OTUD1, antagonizing ZNF598 activity and stimulating formation of polysomes: deubiquitination by OTUD1 promotes stability and translation of a subset mRNAs with a high abundance of rare codons can limit the translation rate. Deubiquitinated by USP10.

The protein resides in the cytoplasm. The protein localises to the nucleus. It localises to the nucleolus. Its function is as follows. Component of the 40S ribosomal subunit. The ribosome is a large ribonucleoprotein complex responsible for the synthesis of proteins in the cell. The sequence is that of Small ribosomal subunit protein eS10 (RPS10) from Oryctolagus cuniculus (Rabbit).